A 109-amino-acid chain; its full sequence is Nucleoid-associated protein CC_0268 (109 aa).

Belongs to the YbaB/EbfC family. As to quaternary structure, homodimer.

It localises to the cytoplasm. It is found in the nucleoid. In terms of biological role, binds to DNA and alters its conformation. May be involved in regulation of gene expression, nucleoid organization and DNA protection. The sequence is that of Nucleoid-associated protein CC_0268 from Caulobacter vibrioides (strain ATCC 19089 / CIP 103742 / CB 15) (Caulobacter crescentus).